A 192-amino-acid polypeptide reads, in one-letter code: Probable thymidylate kinase (192 aa).

An ATP-binding site is contributed by 8 to 15 (GIDGSGKS).

The protein belongs to the thymidylate kinase family.

The catalysed reaction is dTMP + ATP = dTDP + ADP. The chain is Probable thymidylate kinase from Pyrobaculum aerophilum (strain ATCC 51768 / DSM 7523 / JCM 9630 / CIP 104966 / NBRC 100827 / IM2).